The primary structure comprises 214 residues: Alkaline phosphatase-like protein (214 aa).

The next 3 membrane-spanning stretches (helical) occupy residues 48–68 (LGIIGMIIAATIGSVLGALIL), 141–161 (FLILTTLGTLIWNIVLVCLGA), and 177–197 (YSSVVVVILGIIFILAILIFV).

Belongs to the DedA family.

It is found in the cell membrane. This is Alkaline phosphatase-like protein (apl) from Lactococcus lactis subsp. lactis (strain IL1403) (Streptococcus lactis).